We begin with the raw amino-acid sequence, 280 residues long: Polyamine aminopropyltransferase 2 (280 aa).

In terms of domain architecture, PABS spans 2–237 (ELWLDEALEL…GIIGFTYCSK (236 aa)). Gln-33 contacts S-methyl-5'-thioadenosine. His-64 and Asp-88 together coordinate spermidine. S-methyl-5'-thioadenosine contacts are provided by residues Glu-108 and 139 to 140 (DG). Catalysis depends on Asp-157, which acts as the Proton acceptor. 157–160 (DSSD) is a binding site for spermidine. Pro-164 is a binding site for S-methyl-5'-thioadenosine.

It belongs to the spermidine/spermine synthase family. In terms of assembly, homodimer or homotetramer.

The protein localises to the cytoplasm. It catalyses the reaction S-adenosyl 3-(methylsulfanyl)propylamine + putrescine = S-methyl-5'-thioadenosine + spermidine + H(+). It participates in amine and polyamine biosynthesis; spermidine biosynthesis; spermidine from putrescine: step 1/1. In terms of biological role, catalyzes the irreversible transfer of a propylamine group from the amino donor S-adenosylmethioninamine (decarboxy-AdoMet) to putrescine (1,4-diaminobutane) to yield spermidine. The chain is Polyamine aminopropyltransferase 2 from Leptospira interrogans serogroup Icterohaemorrhagiae serovar Lai (strain 56601).